Reading from the N-terminus, the 566-residue chain is 4-coumarate--CoA ligase-like 6 (566 aa).

Positions 1-21 (MAATHLHIPPNPKTQTSHQNP) are disordered. Positions 212, 213, 214, 215, 216, and 220 each coordinate ATP. (E)-4-coumaroyl-AMP is bound at residue Tyr263. Arg284 provides a ligand contact to CoA. An SBD1 region spans residues 286–356 (DASDVVNVIE…QTLPHVDLIQ (71 aa)). The (E)-4-coumaroyl-AMP site is built by Ala334, Gln356, Gly357, and Thr361. Gln356, Gly357, Thr361, Asp442, and Arg457 together coordinate ATP. Residues 357–421 (GYGMTESTAV…IQGPGVMKGY (65 aa)) are SBD2. Positions 459 and 463 each coordinate (E)-4-coumaroyl-AMP. Residues Lys465 and Gly466 each contribute to the CoA site. Lys548 provides a ligand contact to ATP. The Microbody targeting signal signature appears at 564–566 (SRL).

This sequence belongs to the ATP-dependent AMP-binding enzyme family. Mg(2+) is required as a cofactor. In terms of tissue distribution, expressed at very low level in leaves.

Its subcellular location is the peroxisome. It catalyses the reaction (E)-4-coumarate + ATP + CoA = (E)-4-coumaroyl-CoA + AMP + diphosphate. The enzyme catalyses (E)-4-coumarate + ATP + H(+) = (E)-4-coumaroyl-AMP + diphosphate. The catalysed reaction is (E)-4-coumaroyl-AMP + CoA = (E)-4-coumaroyl-CoA + AMP + H(+). It carries out the reaction (E)-ferulate + ATP + CoA = (E)-feruloyl-CoA + AMP + diphosphate. It catalyses the reaction (E)-ferulate + ATP + H(+) = (E)-feruloyl-AMP + diphosphate. The enzyme catalyses (E)-feruloyl-AMP + CoA = (E)-feruloyl-CoA + AMP + H(+). The catalysed reaction is (E)-caffeate + ATP + CoA = (E)-caffeoyl-CoA + AMP + diphosphate. It carries out the reaction (E)-caffeate + ATP + H(+) = (E)-caffeoyl-AMP + diphosphate. It catalyses the reaction (E)-caffeoyl-AMP + CoA = (E)-caffeoyl-CoA + AMP + H(+). The enzyme catalyses (E)-cinnamate + ATP + CoA = (E)-cinnamoyl-CoA + AMP + diphosphate. The catalysed reaction is 4-hydroxybenzoate + ATP + CoA = 4-hydroxybenzoyl-CoA + AMP + diphosphate. It carries out the reaction tetradecanoate + ATP + CoA = tetradecanoyl-CoA + AMP + diphosphate. It catalyses the reaction hexanoate + ATP + CoA = hexanoyl-CoA + AMP + diphosphate. The enzyme catalyses heptanoate + ATP + CoA = heptanoyl-CoA + AMP + diphosphate. Its function is as follows. Contributes to jasmonic acid biosynthesis by initiating the beta-oxidative chain shortening of its precursors. Acts as a carboxylate--CoA ligase that can use preferentially p-coumarate, ferulate and caffeate as substrates and, with a lower efficiency, (E)-cinnamate and 4-hydroxybenzoate as substrates. Involved in the biosynthesis of ubiquinone from phenylalanine by activating the propyl side chain of 4-coumarate, and possibly trans-cinnamate and 4-hydroxybenzoate, for subsequent beta-oxidative shortening and the formation of the benzenoid moiety of ubiquinone. Follows a two-step reaction mechanism, wherein the carboxylate substrate first undergoes adenylation by ATP, followed by a thioesterification in the presence of CoA to yield the final CoA thioester. The chain is 4-coumarate--CoA ligase-like 6 from Arabidopsis thaliana (Mouse-ear cress).